The following is a 131-amino-acid chain: Urease subunit beta (131 aa).

The segment at 100–131 is disordered; it reads PLDPAAGVTSDEDAASAVVPRGAETSEREARA.

Belongs to the urease beta subunit family. Heterotrimer of UreA (gamma), UreB (beta) and UreC (alpha) subunits. Three heterotrimers associate to form the active enzyme.

The protein localises to the cytoplasm. The catalysed reaction is urea + 2 H2O + H(+) = hydrogencarbonate + 2 NH4(+). It participates in nitrogen metabolism; urea degradation; CO(2) and NH(3) from urea (urease route): step 1/1. The polypeptide is Urease subunit beta (Kocuria rhizophila (strain ATCC 9341 / DSM 348 / NBRC 103217 / DC2201)).